A 382-amino-acid chain; its full sequence is Alkanesulfonate monooxygenase (382 aa).

This sequence belongs to the SsuD family.

It catalyses the reaction an alkanesulfonate + FMNH2 + O2 = an aldehyde + FMN + sulfite + H2O + 2 H(+). Functionally, catalyzes the desulfonation of aliphatic sulfonates. The chain is Alkanesulfonate monooxygenase from Pseudomonas sp.